Here is a 214-residue protein sequence, read N- to C-terminus: Probable nicotinate-nucleotide adenylyltransferase (214 aa).

This sequence belongs to the NadD family.

The enzyme catalyses nicotinate beta-D-ribonucleotide + ATP + H(+) = deamido-NAD(+) + diphosphate. The protein operates within cofactor biosynthesis; NAD(+) biosynthesis; deamido-NAD(+) from nicotinate D-ribonucleotide: step 1/1. Its function is as follows. Catalyzes the reversible adenylation of nicotinate mononucleotide (NaMN) to nicotinic acid adenine dinucleotide (NaAD). The protein is Probable nicotinate-nucleotide adenylyltransferase of Buchnera aphidicola subsp. Acyrthosiphon pisum (strain Tuc7).